We begin with the raw amino-acid sequence, 700 residues long: DNA ligase 2 (700 aa).

Residues 42-46 (DDAYD) and 89-90 (SL) contribute to the NAD(+) site. The N6-AMP-lysine intermediate role is filled by K122. 4 residues coordinate NAD(+): R143, E177, K303, and K327. Residues C421, C424, C437, and C443 each contribute to the Zn(2+) site. Positions 590–621 (MTEPGATPPRPADTDGADGATAEAPGDGGPLA) are disordered. Residues 615-700 (GDGGPLAGMK…FAVLVAGLLS (86 aa)) enclose the BRCT domain.

Belongs to the NAD-dependent DNA ligase family. LigA subfamily. Requires Mg(2+) as cofactor. It depends on Mn(2+) as a cofactor.

It carries out the reaction NAD(+) + (deoxyribonucleotide)n-3'-hydroxyl + 5'-phospho-(deoxyribonucleotide)m = (deoxyribonucleotide)n+m + AMP + beta-nicotinamide D-nucleotide.. Functionally, DNA ligase that catalyzes the formation of phosphodiester linkages between 5'-phosphoryl and 3'-hydroxyl groups in double-stranded DNA using NAD as a coenzyme and as the energy source for the reaction. It is essential for DNA replication and repair of damaged DNA. The protein is DNA ligase 2 of Streptomyces coelicolor (strain ATCC BAA-471 / A3(2) / M145).